Here is a 211-residue protein sequence, read N- to C-terminus: Glycerol-3-phosphate acyltransferase (211 aa).

Transmembrane regions (helical) follow at residues 10-30 (FYTW…FGLL), 63-83 (TLTL…IKFL), 90-110 (SIII…PIWL), 126-146 (LGYY…FFIL), 152-172 (LSAL…YPHL), and 174-194 (AHCI…ANIA).

This sequence belongs to the PlsY family. Probably interacts with PlsX.

Its subcellular location is the cell inner membrane. The catalysed reaction is an acyl phosphate + sn-glycerol 3-phosphate = a 1-acyl-sn-glycero-3-phosphate + phosphate. Its pathway is lipid metabolism; phospholipid metabolism. Its function is as follows. Catalyzes the transfer of an acyl group from acyl-phosphate (acyl-PO(4)) to glycerol-3-phosphate (G3P) to form lysophosphatidic acid (LPA). This enzyme utilizes acyl-phosphate as fatty acyl donor, but not acyl-CoA or acyl-ACP. This Bartonella quintana (strain Toulouse) (Rochalimaea quintana) protein is Glycerol-3-phosphate acyltransferase.